A 107-amino-acid chain; its full sequence is Small ribosomal subunit protein uS17 (107 aa).

Belongs to the universal ribosomal protein uS17 family. Part of the 30S ribosomal subunit.

Functionally, one of the primary rRNA binding proteins, it binds specifically to the 5'-end of 16S ribosomal RNA. The chain is Small ribosomal subunit protein uS17 from Nitrosopumilus maritimus (strain SCM1).